Reading from the N-terminus, the 385-residue chain is 28S rRNA (uridine-N(3))-methyltransferase (385 aa).

2 disordered regions span residues 1-35 and 47-72; these read MAER…KKKW and QRAQ…NQGR. 2 stretches are compositionally biased toward basic and acidic residues: residues 15–35 and 47–58; these read HGQR…KKKW and QRAQEEEAKRQE. The S-adenosyl-L-methionine site is built by arginine 293, glycine 313, asparagine 342, and threonine 343.

Belongs to the class IV-like SAM-binding methyltransferase superfamily. Interacts with INCA1.

The protein localises to the cytoplasm. It localises to the cytoskeleton. It is found in the spindle. The protein resides in the chromosome. Its subcellular location is the centromere. The protein localises to the kinetochore. It localises to the microtubule organizing center. It is found in the centrosome. The enzyme catalyses uridine in 28S rRNA + S-adenosyl-L-methionine = N(3)-methyluridine in 28S rRNA + S-adenosyl-L-homocysteine + H(+). Functionally, S-adenosyl-L-methionine-dependent methyltransferase that specifically methylates the N3 position of a uridine in 28S rRNA. Required for association of the centrosomes with the poles of the bipolar mitotic spindle during metaphase. Also involved in chromosome alignment. May promote centrosome maturation probably by recruiting A-kinase anchor protein AKAP9 to centrosomes in early mitosis. Binds specifically to miRNA MIR145 hairpin, regulates MIR145 expression at a postranscriptional level. This is 28S rRNA (uridine-N(3))-methyltransferase from Mus musculus (Mouse).